The sequence spans 297 residues: Large ribosomal subunit protein uL18 (297 aa).

Lys-164 participates in a covalent cross-link: Glycyl lysine isopeptide (Lys-Gly) (interchain with G-Cter in ubiquitin). Ser-167, Ser-176, and Ser-235 each carry phosphoserine.

It belongs to the universal ribosomal protein uL18 family. As to quaternary structure, component of the large ribosomal subunit (LSU). Mature yeast ribosomes consist of a small (40S) and a large (60S) subunit. The 40S small subunit contains 1 molecule of ribosomal RNA (18S rRNA) and 33 different proteins (encoded by 57 genes). The large 60S subunit contains 3 rRNA molecules (25S, 5.8S and 5S rRNA) and 46 different proteins (encoded by 81 genes). Component of a hexameric 5S RNP precursor complex, composed of 5S RNA, RRS1, RPF2, RPL5, RPL11A/RPL11B and SYO1; this complex acts as a precursor for ribosome assembly. RPL5/uL18 forms a heterotrimeric complex with SYO1 and RPL11A/RPL11B/uL5. Interaction of this complex with KAP104 allows the nuclear import of the heterotrimer.

The protein resides in the cytoplasm. It localises to the nucleus. Component of the ribosome, a large ribonucleoprotein complex responsible for the synthesis of proteins in the cell. The small ribosomal subunit (SSU) binds messenger RNAs (mRNAs) and translates the encoded message by selecting cognate aminoacyl-transfer RNA (tRNA) molecules. The large subunit (LSU) contains the ribosomal catalytic site termed the peptidyl transferase center (PTC), which catalyzes the formation of peptide bonds, thereby polymerizing the amino acids delivered by tRNAs into a polypeptide chain. The nascent polypeptides leave the ribosome through a tunnel in the LSU and interact with protein factors that function in enzymatic processing, targeting, and the membrane insertion of nascent chains at the exit of the ribosomal tunnel. This is Large ribosomal subunit protein uL18 from Saccharomyces cerevisiae (strain ATCC 204508 / S288c) (Baker's yeast).